Consider the following 197-residue polypeptide: uncharacterized protein (197 aa).

An SIS domain is found at 33-184 (MISKIMDASS…IAEFMSILGK (152 aa)).

This sequence belongs to the SIS family. PHI subfamily.

This is an uncharacterized protein from Methanothermobacter thermautotrophicus (strain ATCC 29096 / DSM 1053 / JCM 10044 / NBRC 100330 / Delta H) (Methanobacterium thermoautotrophicum).